The primary structure comprises 395 residues: Tryptophan--tRNA ligase (395 aa).

ATP-binding positions include 8 to 10 and 16 to 17; these read RPT and GH. Positions 9–17 match the 'HIGH' region motif; the sequence is PTGKLHLGH. The segment at 117-179 is insert; sequence RLTDLEKEFK…EIEPEILKRL (63 aa). Residue aspartate 204 coordinates L-tryptophan. ATP contacts are provided by residues 216–218, isoleucine 254, and 261–265; these read GED and KMSKS. The short motif at 261–265 is the 'KMSKS' region element; it reads KMSKS.

This sequence belongs to the class-I aminoacyl-tRNA synthetase family. Homodimer.

The protein localises to the cytoplasm. It catalyses the reaction tRNA(Trp) + L-tryptophan + ATP = L-tryptophyl-tRNA(Trp) + AMP + diphosphate + H(+). In terms of biological role, catalyzes the attachment of tryptophan to tRNA(Trp). This chain is Tryptophan--tRNA ligase, found in Aquifex aeolicus (strain VF5).